The following is a 406-amino-acid chain: Olfactomedin-like protein 3 (406 aa).

The first 21 residues, 1–21 (MGPSAPLLLLFFLSWTGPLQG), serve as a signal peptide directing secretion. Residues 25-101 (HLVEYMERRL…REVDYLETQN (77 aa)) are a coiled coil. The Olfactomedin-like domain occupies 134-401 (DCSYTVAQVR…QIVYKLEMKK (268 aa)). Cysteine 135 and cysteine 328 are joined by a disulfide. Asparagine 177 and asparagine 248 each carry an N-linked (GlcNAc...) asparagine glycan.

The protein belongs to the OLFML3 family.

It localises to the secreted. Functionally, secreted scaffold protein that plays an essential role in dorsoventral patterning during early development. Stabilizes axial formation by restricting chordin (CHRD) activity on the dorsal side. Acts by facilitating the association between the tolloid proteases and their substrate chordin (CHRD), leading to enhance chordin (CHRD) degradation. May have matrix-related function involved in placental and embryonic development, or play a similar role in other physiological processes. In Mus musculus (Mouse), this protein is Olfactomedin-like protein 3 (Olfml3).